A 138-amino-acid polypeptide reads, in one-letter code: Large ribosomal subunit protein bL17 (138 aa).

This sequence belongs to the bacterial ribosomal protein bL17 family. As to quaternary structure, part of the 50S ribosomal subunit. Contacts protein L32.

In Jannaschia sp. (strain CCS1), this protein is Large ribosomal subunit protein bL17.